Consider the following 1028-residue polypeptide: Contactin-3 (1028 aa).

A signal peptide spans 1–19 (MMLSWKQLILLSFIGCLAG). 6 consecutive Ig-like C2-type domains span residues 32–117 (PSNS…AKLQ), 122–209 (ENFK…RVLG), 227–313 (PKIE…GRLT), 318–402 (PYWL…AELK), 408–497 (PDFS…LVVT), and 499–593 (PTRI…AELI). Cystine bridges form between C50–C100, C144–C196, C249–C297, C339–C386, and C431–C479. N-linked (GlcNAc...) asparagine glycans are attached at residues N65 and N193. Residues N377, N468, and N489 are each glycosylated (N-linked (GlcNAc...) asparagine). C521 and C577 are joined by a disulfide. Fibronectin type-III domains lie at 600–698 (PPEN…TEEA), 703–800 (APSE…SAEE), 805–901 (APSH…TKKT), and 902–998 (PPSQ…TSMD). The disordered stretch occupies residues 684-714 (GEPSLPSEKVRTEEAAPEIAPSEVSGGGGSR). Residues N765, N860, N895, N913, N931, and N956 are each glycosylated (N-linked (GlcNAc...) asparagine). S1002 carries GPI-anchor amidated serine lipidation. A propeptide spans 1003–1028 (TSAISNIHPLSGYMSVLLFFIVNALW) (removed in mature form).

The protein belongs to the immunoglobulin superfamily. Contactin family. As to quaternary structure, interacts with PTPRG. Specifically expressed in brain. Ectopically expressed in tumors expressing endogenous intracisternal A-type particles (IAPs).

The protein resides in the cell membrane. Functionally, contactins mediate cell surface interactions during nervous system development. Has some neurite outgrowth-promoting activity. The chain is Contactin-3 (Cntn3) from Mus musculus (Mouse).